The chain runs to 479 residues: Tegument protein VP16 homolog (479 aa).

The protein belongs to the herpesviridae tegument protein VP16 protein family. Associates with the VP16-induced complex; binding to host HCFC1 activates VP16 for association with the octamer motif-binding host protein POU2F1, to form a multiprotein-DNA complex responsible for activating transcription of the viral immediate early genes.

The protein resides in the virion tegument. It localises to the host nucleus. Transcriptional activator of immediate-early (IE) gene products (alpha genes). Acts as a key activator of lytic infection by initiating the lytic program through the assembly of the transcriptional regulatory VP16-induced complex composed of VP16 and two cellular factors, HCFC1 and POU2F1. VP16-induced complex represents a regulatory switch: when it is on, it promotes IE-gene expression and thus lytic infection, and when it is off, it limits IE-gene transcription favoring latent infection. In terms of biological role, may play a role in the aggregation of tegument proteins around nucleocapsids during virus morphogenesis. In Equus caballus (Horse), this protein is Tegument protein VP16 homolog.